The following is a 161-amino-acid chain: S-ribosylhomocysteine lyase (161 aa).

Positions 58, 62, and 128 each coordinate Fe cation.

It belongs to the LuxS family. In terms of assembly, homodimer. Requires Fe cation as cofactor.

It carries out the reaction S-(5-deoxy-D-ribos-5-yl)-L-homocysteine = (S)-4,5-dihydroxypentane-2,3-dione + L-homocysteine. In terms of biological role, involved in the synthesis of autoinducer 2 (AI-2) which is secreted by bacteria and is used to communicate both the cell density and the metabolic potential of the environment. The regulation of gene expression in response to changes in cell density is called quorum sensing. Catalyzes the transformation of S-ribosylhomocysteine (RHC) to homocysteine (HC) and 4,5-dihydroxy-2,3-pentadione (DPD). The polypeptide is S-ribosylhomocysteine lyase (Bifidobacterium adolescentis (strain ATCC 15703 / DSM 20083 / NCTC 11814 / E194a)).